A 1149-amino-acid chain; its full sequence is MWRFPLILASVCWLTTAQQQNVANDPDKKLASFDACKADIHKHCSRPDVDLTSDMSILECLQDAGFSETATLSEQCEQLVWDFKVKITQDERFVSAAKQYCEEELKGNAAMNLCTSQTQPGFALSCLMEFTKNVTETGKCHAFLARTERLAFSDFRLVGPFVTKCRAILDKFKCNVLTPDPAHKGVRVAHTQGMALECILDKVVKNAKTQADALQILGDDCKHEVLRLAEMQADDFHLDRPLFFACRLDRERYCKDVPSGEGKVFECLMMNRNDKFMDPECGNLLAERAYLMGRDYRMAHPLTKACQPELTRYKCEPQNQIESAAHFHLAWILLCLENGANQPEHKEVQPSKECAHEMITHRQMMMQHFRMAPELVLNCAQEIDKWCSPRGDIEAEGRTLHCLMEHAESRNETLKLGAQCLQAVQQVVKVADIGRNYKVDKVLYGSCRSLIDGPCAQDAVSETATLTCLMRNVDSPDMVPECEKRLLEVQYFMARDWTMDPQLYEACHQEAVSRCSALDNWHQQHNSDNTVDRGPQVLACLYRSAYDEQNPLSVKCGTQVRQLLHVRAVRVNLIPEIEDSCREALSEFCSHNVKPSEEMMCLQQNFETDNFKRKHPQCFAELTKFTEMEAKDTKLNRALSKACKPVISTHCAQFANEEIDHGDVLECLVNNKDAKEMNNKCRSYVNHFELISLRDYHFSYKFQKACASDIEQSCKGHNNDKGEIIRCLSEVRFEHKVLGSPKDLTDDCKKQLKVAYLQQEQVEFDDKEHMADADPKLSQKCEQEIKMYKCNQADTFEDTIECLRLNFEHLGPECKSMIFYREKIEAVDNSMDDELQKKCRYDIGKFCANSDSENVLECLTNTKIVRLLQRECKAIVKERMQESARDVRLRPQLLTSCRKEAEQYCPEDMKKINMPQYSQTVLDGVVVSCLRDKFRQSISDQNHIDFSPRCSAEVSRAIVEAEFDPQLDPPLYNACKSTINDHCSATIMESGGHFDNVMECLKNDFNKGLIRDKQCSEQVARRLQESLVDIHLDPVLHEACAMDIQRYCRDVPPGHSRIVMCLMDSADKQELSKECSTKLSDRNKLWMKAHSEFQMALPDSWHAFANLVMEHPERNSILGYLAGFIVFILLIGCCCGRVSKKQYIEMKNR.

The N-terminal stretch at 1 to 19 is a signal peptide; it reads MWRFPLILASVCWLTTAQQ. The Extracellular segment spans residues 20 to 1115; that stretch reads QNVANDPDKK…NLVMEHPERN (1096 aa). 16 Cys-rich GLG1 repeats span residues 24 to 69, 71 to 135, 139 to 207, 216 to 276, 277 to 344, 349 to 411, 415 to 475, 477 to 549, 551 to 610, 613 to 676, 677 to 736, 743 to 803, 809 to 867, 868 to 938, 945 to 1009, and 1010 to 1070; these read NDPD…FSET, TLSE…KNVT, KCHA…VKNA, ILGD…NDKF, MDPE…NQPE, QPSK…ESRN, KLGA…NVDS, DMVP…YDEQ, PLSV…ETDN, RKHP…DAKE, MNNK…FEHK, DLTD…IECL, HLGP…IVRL, LQRE…RQSI, DFSP…NKGL, and IRDK…DKQE. Residue N133 is glycosylated (N-linked (GlcNAc...) asparagine). N411 is a glycosylation site (N-linked (GlcNAc...) asparagine). Residues 1116–1136 traverse the membrane as a helical segment; that stretch reads SILGYLAGFIVFILLIGCCCG. Residues 1137-1149 are Cytoplasmic-facing; it reads RVSKKQYIEMKNR.

It is found in the membrane. This chain is Golgi apparatus protein 1 homolog, found in Caenorhabditis elegans.